The sequence spans 699 residues: Protein phosphatase 1 regulatory subunit 37 (699 aa).

The span at 1–12 shows a compositional bias: pro residues; that stretch reads MEIPPQEAPPGP. The interval 1–42 is disordered; it reads MEIPPQEAPPGPGADGEAEEAPVEAPSPGPASPPADGRLKAA. A phosphoserine mark is found at S50 and S56. LRR repeat units lie at residues 220 to 240, 248 to 269, 277 to 297, 306 to 326, and 334 to 354; these read SLAV…MLLA, TLRE…AQLG, SLQI…AYIC, GLAT…AFLG, and SLET…RNLK. Residues 467–667 form a disordered region; sequence RLQLSASMPE…PPGPEAKVGS (201 aa). Residues 510-525 show a composition bias toward acidic residues; that stretch reads SDSDSDSEGEDRDEAD. At S566 the chain carries Phosphoserine. Pro residues-rich tracts occupy residues 588–613 and 622–642; these read PPVP…PFPT and DPGP…PPLP.

This sequence belongs to the PPP1R37 family. Interacts with PPP1CA.

Functionally, inhibits phosphatase activity of protein phosphatase 1 (PP1) complexes. This is Protein phosphatase 1 regulatory subunit 37 (PPP1R37) from Bos taurus (Bovine).